The sequence spans 431 residues: Transcription factor Sp7 (431 aa).

A disordered region spans residues 30-56 (SSPLRDSTTLGKAGTKKPYSVGSDLSA). N6-propionyllysine occurs at positions 41 and 45. A Glycyl lysine isopeptide (Lys-Gly) (interchain with G-Cter in ubiquitin) cross-link involves residue Lys58. 2 disordered regions span residues 71 to 115 (TNGL…VPKG) and 154 to 260 (TPTP…SGGY). The 9aaTAD signature appears at 156–164 (TPWWDMHPG). Residues 166–178 (NWLGGGQGQGDGL) are compositionally biased toward gly residues. Lys230 participates in a covalent cross-link: Glycyl lysine isopeptide (Lys-Gly) (interchain with G-Cter in ubiquitin). C2H2-type zinc fingers lie at residues 294–318 (HSCH…LRWH), 324–348 (FVCN…VRTH), and 354–376 (FTCL…QRTH). 2 positions are modified to N6-propionyllysine: Lys361 and Lys371. Positions 367 to 431 (DHLSKHQRTH…SPEQSNLLEI (65 aa)) are disordered. Positions 403–412 (SQTPRPSASP) are enriched in polar residues.

The protein belongs to the Sp1 C2H2-type zinc-finger protein family. As to quaternary structure, interacts with RIOX1; the interaction is direct and inhibits transcription activator activity. In terms of processing, ubiquitination at leads to proteasomal degradation. SP7 is a short-live protein with an endogenous half-life of approximately 12 hours. Post-translationally, propionylated. Depropionylation at Lys-371 by SIRT7 activates transcription factor activity and positively regulates bone formation by osteoblasts. As to expression, restricted to bone-derived cell.

The protein localises to the nucleus. Its function is as follows. Transcriptional activator essential for osteoblast differentiation. Binds to SP1 and EKLF consensus sequences and to other G/C-rich sequences. The polypeptide is Transcription factor Sp7 (SP7) (Homo sapiens (Human)).